A 157-amino-acid polypeptide reads, in one-letter code: DNA gyrase inhibitor (157 aa).

It belongs to the DNA gyrase inhibitor family. Interacts with DNA gyrase.

The protein resides in the cytoplasm. Inhibits the supercoiling activity of DNA gyrase. Acts by inhibiting DNA gyrase at an early step, prior to (or at the step of) binding of DNA by the gyrase. It protects cells against toxins that target DNA gyrase, by inhibiting activity of these toxins and reducing the formation of lethal double-strand breaks in the cell. This Citrobacter rodentium (strain ICC168) (Citrobacter freundii biotype 4280) protein is DNA gyrase inhibitor.